The following is a 179-amino-acid chain: Negative modulator of initiation of replication (179 aa).

This sequence belongs to the SeqA family. In terms of assembly, homodimer. Polymerizes to form helical filaments.

The protein resides in the cytoplasm. Negative regulator of replication initiation, which contributes to regulation of DNA replication and ensures that replication initiation occurs exactly once per chromosome per cell cycle. Binds to pairs of hemimethylated GATC sequences in the oriC region, thus preventing assembly of replication proteins and re-initiation at newly replicated origins. Repression is relieved when the region becomes fully methylated. This Vibrio atlanticus (strain LGP32) (Vibrio splendidus (strain Mel32)) protein is Negative modulator of initiation of replication.